The chain runs to 320 residues: Lipoyl synthase (320 aa).

[4Fe-4S] cluster is bound by residues Cys67, Cys72, Cys78, Cys93, Cys97, Cys100, and Ser307. Positions 79–296 constitute a Radical SAM core domain; it reads FNHGTATFMI…RDKANEMGFE (218 aa).

The protein belongs to the radical SAM superfamily. Lipoyl synthase family. [4Fe-4S] cluster serves as cofactor.

It is found in the cytoplasm. It carries out the reaction [[Fe-S] cluster scaffold protein carrying a second [4Fe-4S](2+) cluster] + N(6)-octanoyl-L-lysyl-[protein] + 2 oxidized [2Fe-2S]-[ferredoxin] + 2 S-adenosyl-L-methionine + 4 H(+) = [[Fe-S] cluster scaffold protein] + N(6)-[(R)-dihydrolipoyl]-L-lysyl-[protein] + 4 Fe(3+) + 2 hydrogen sulfide + 2 5'-deoxyadenosine + 2 L-methionine + 2 reduced [2Fe-2S]-[ferredoxin]. It functions in the pathway protein modification; protein lipoylation via endogenous pathway; protein N(6)-(lipoyl)lysine from octanoyl-[acyl-carrier-protein]: step 2/2. Catalyzes the radical-mediated insertion of two sulfur atoms into the C-6 and C-8 positions of the octanoyl moiety bound to the lipoyl domains of lipoate-dependent enzymes, thereby converting the octanoylated domains into lipoylated derivatives. The chain is Lipoyl synthase from Haemophilus influenzae (strain PittGG).